We begin with the raw amino-acid sequence, 44 residues long: Cytochrome b559 subunit beta (44 aa).

The helical transmembrane segment at 19–35 (WLAVHTLAVPTVFFVGA) threads the bilayer. His23 lines the heme pocket.

This sequence belongs to the PsbE/PsbF family. As to quaternary structure, heterodimer of an alpha subunit and a beta subunit. PSII is composed of 1 copy each of membrane proteins PsbA, PsbB, PsbC, PsbD, PsbE, PsbF, PsbH, PsbI, PsbJ, PsbK, PsbL, PsbM, PsbT, PsbX, PsbY, PsbZ, Psb30/Ycf12, peripheral proteins PsbO, CyanoQ (PsbQ), PsbU, PsbV and a large number of cofactors. It forms dimeric complexes. Requires heme b as cofactor.

Its subcellular location is the cellular thylakoid membrane. In terms of biological role, this b-type cytochrome is tightly associated with the reaction center of photosystem II (PSII). PSII is a light-driven water:plastoquinone oxidoreductase that uses light energy to abstract electrons from H(2)O, generating O(2) and a proton gradient subsequently used for ATP formation. It consists of a core antenna complex that captures photons, and an electron transfer chain that converts photonic excitation into a charge separation. The protein is Cytochrome b559 subunit beta of Crocosphaera subtropica (strain ATCC 51142 / BH68) (Cyanothece sp. (strain ATCC 51142)).